A 1026-amino-acid chain; its full sequence is Probable DNA-directed RNA polymerase II subunit RPB1 homolog (1026 aa).

Zn(2+) contacts are provided by cysteine 62, cysteine 65, cysteine 72, histidine 75, cysteine 102, cysteine 105, and cysteine 142. Mg(2+) contacts are provided by aspartate 588, aspartate 590, and aspartate 592.

This sequence belongs to the RNA polymerase beta' chain family.

It carries out the reaction RNA(n) + a ribonucleoside 5'-triphosphate = RNA(n+1) + diphosphate. Its function is as follows. Component of the DNA-dependent RNA polymerase that catalyzes the transcription of DNA into RNA using the four ribonucleoside triphosphates as substrates. Largest and catalytic component of RNA polymerase II which synthesizes mRNA precursors and many functional non-coding RNAs. Forms the polymerase active center together with the second largest subunit. This is Probable DNA-directed RNA polymerase II subunit RPB1 homolog from Acheta domesticus (House cricket).